A 1080-amino-acid polypeptide reads, in one-letter code: AP-4 complex subunit epsilon (1080 aa).

5 HEAT repeats span residues 161–198 (DTIP…LVGD), 201–238 (LDDD…KHST), 369–405 (QLIE…KVSP), 406–443 (KLVL…QTNV), and 445–479 (PVCS…KYSP). 4 disordered regions span residues 711-782 (TPLV…FPQQ), 801-920 (NNNS…NIDP), 933-973 (FSEN…INNN), and 996-1027 (TNNS…NNNL). Low complexity-rich tracts occupy residues 762-782 (QQQQ…FPQQ), 801-847 (NNNS…PNNQ), 878-911 (NKQT…IQKH), 936-952 (NNNR…NQNN), and 962-972 (KKSNNENNINN).

The protein belongs to the adaptor complexes large subunit family. As to quaternary structure, may be part of the adaptor protein complex 4 (AP-4), a heterotetramer composed of two large adaptins (epsilon-type subunitand beta-type subunit), a medium adaptin (mu-type subunit) and a small adaptin (sigma-type).

It localises to the golgi apparatus. Its subcellular location is the trans-Golgi network membrane. In terms of biological role, probable component of an adaptor protein complex. Adaptor protein complexes are vesicle coat components involved both in vesicle formation and cargo selection. They control the vesicular transport of proteins in different trafficking pathways. The polypeptide is AP-4 complex subunit epsilon (Dictyostelium discoideum (Social amoeba)).